A 415-amino-acid polypeptide reads, in one-letter code: Multidrug resistance protein MdtA (415 aa).

Residues 1 to 21 (MKGSYKSRWVIVIVVVIAAIA) form the signal peptide. Polar residues predominate over residues 34-47 (SAAPGATKQAQQSP). Disordered stretches follow at residues 34-60 (SAAPGATKQAQQSPAGGRRGMRSGPLA) and 392-415 (EAQSATTPEEKATSREYAKKGARS). Positions 399 to 415 (PEEKATSREYAKKGARS) are enriched in basic and acidic residues.

It belongs to the membrane fusion protein (MFP) (TC 8.A.1) family. Part of a tripartite efflux system composed of MdtA, MdtB and MdtC.

Its subcellular location is the cell inner membrane. The MdtABC tripartite complex confers resistance against novobiocin and deoxycholate. This Escherichia fergusonii (strain ATCC 35469 / DSM 13698 / CCUG 18766 / IAM 14443 / JCM 21226 / LMG 7866 / NBRC 102419 / NCTC 12128 / CDC 0568-73) protein is Multidrug resistance protein MdtA.